The following is a 367-amino-acid chain: Quinolinate synthase (367 aa).

2 residues coordinate iminosuccinate: His-45 and Ser-62. [4Fe-4S] cluster is bound at residue Cys-109. Residues 140 to 142 (YVN) and Ser-161 contribute to the iminosuccinate site. A [4Fe-4S] cluster-binding site is contributed by Cys-229. Residues 255 to 257 (HPE) and Thr-272 contribute to the iminosuccinate site. Cys-319 lines the [4Fe-4S] cluster pocket.

The protein belongs to the quinolinate synthase family. Type 3 subfamily. The cofactor is [4Fe-4S] cluster.

The protein localises to the cytoplasm. It catalyses the reaction iminosuccinate + dihydroxyacetone phosphate = quinolinate + phosphate + 2 H2O + H(+). It functions in the pathway cofactor biosynthesis; NAD(+) biosynthesis; quinolinate from iminoaspartate: step 1/1. In terms of biological role, catalyzes the condensation of iminoaspartate with dihydroxyacetone phosphate to form quinolinate. This chain is Quinolinate synthase, found in Halalkalibacterium halodurans (strain ATCC BAA-125 / DSM 18197 / FERM 7344 / JCM 9153 / C-125) (Bacillus halodurans).